The primary structure comprises 949 residues: Glycine dehydrogenase (decarboxylating) (949 aa).

Lys700 bears the N6-(pyridoxal phosphate)lysine mark.

The protein belongs to the GcvP family. As to quaternary structure, the glycine cleavage system is composed of four proteins: P, T, L and H. It depends on pyridoxal 5'-phosphate as a cofactor.

It catalyses the reaction N(6)-[(R)-lipoyl]-L-lysyl-[glycine-cleavage complex H protein] + glycine + H(+) = N(6)-[(R)-S(8)-aminomethyldihydrolipoyl]-L-lysyl-[glycine-cleavage complex H protein] + CO2. The glycine cleavage system catalyzes the degradation of glycine. The P protein binds the alpha-amino group of glycine through its pyridoxal phosphate cofactor; CO(2) is released and the remaining methylamine moiety is then transferred to the lipoamide cofactor of the H protein. In Flavobacterium johnsoniae (strain ATCC 17061 / DSM 2064 / JCM 8514 / BCRC 14874 / CCUG 350202 / NBRC 14942 / NCIMB 11054 / UW101) (Cytophaga johnsonae), this protein is Glycine dehydrogenase (decarboxylating).